The following is a 334-amino-acid chain: Chitin synthase export chaperone (334 aa).

The next 7 helical transmembrane spans lie at 49-69 (IIFE…TVIM), 85-105 (ILSF…IDAG), 123-143 (GLSS…FQLY), 159-179 (LAAF…WAGL), 185-205 (VGLF…YVAM), 220-240 (LGDI…LYAF), and 244-264 (ICIA…CNLL).

This sequence belongs to the CHS7 family.

The protein resides in the endoplasmic reticulum membrane. In terms of biological role, chaperone required for the export of the chitin synthase chs3 from the endoplasmic reticulum. Plays a critical role in cell wall integrity and virulence. This is Chitin synthase export chaperone from Fusarium oxysporum f. sp. lycopersici (strain 4287 / CBS 123668 / FGSC 9935 / NRRL 34936) (Fusarium vascular wilt of tomato).